A 760-amino-acid chain; its full sequence is Mitochondrial intermediate peptidase (760 aa).

A mitochondrion-targeting transit peptide spans 1 to 19 (MLARSVRTLVVSPKTVFRF). His543 contributes to the Zn(2+) binding site. Residue Glu544 is part of the active site. His547 provides a ligand contact to Zn(2+).

The protein belongs to the peptidase M3 family. Zn(2+) serves as cofactor.

Its subcellular location is the mitochondrion matrix. The enzyme catalyses Release of an N-terminal octapeptide as second stage of processing of some proteins imported into the mitochondrion.. Functionally, cleaves proteins, imported into the mitochondrion, to their mature size. While most mitochondrial precursor proteins are processed to the mature form in one step by mitochondrial processing peptidase (MPP), the sequential cleavage by MIP of an octapeptide after initial processing by MPP is a required step for a subgroup of nuclear-encoded precursor proteins destined for the matrix or the inner membrane. This is Mitochondrial intermediate peptidase (OCT1) from Leucoagaricus gongylophorus (Leaf-cutting ant fungus).